Reading from the N-terminus, the 138-residue chain is Histone H3-like centromeric protein A (138 aa).

Residues 1 to 40 (MGPRRQKRKPETPRRRPASPAPAAPRPTPSLGTSSRPLAR) are disordered. The residue at position 2 (Gly-2) is a N,N,N-trimethylglycine. Ser-19 bears the Phosphoserine mark. Over residues 19 to 28 (SPAPAAPRPT) the composition is skewed to pro residues. Positions 37–52 (PLARRRHTVLKEIRTL) are important for flexibility of DNA ends that protrude from nucleosomes. An H3-like region spans residues 39–138 (ARRRHTVLKE…RIRGIQEGLG (100 aa)). The CATD stretch occupies residues 73 to 114 (CVQFTRGVDFNWQAQALLALQEAAEAFLVHLFEDAYLLSLHA).

The protein belongs to the histone H3 family. Component of centromeric nucleosomes, where DNA is wrapped around a histone octamer core. The octamer contains two molecules each of H2A, H2B, CENPA and H4 assembled in one CENPA-H4 heterotetramer and two H2A-H2B heterodimers. CENPA modulates the DNA-binding characteristics of nucleosomes so that protruding DNA ends have higher flexibility than in nucleosomes containing conventional histone H3. Inhibits binding of histone H1 to nucleosomes, since histone H1 binds preferentially to rigid DNA linkers that protrude from nucleosomes. Nucleosomes containing CENPA also contain histone H2A variants such as MACROH2A and H2A.Z/H2AZ1. The CENPA-H4 heterotetramer is more compact and structurally more rigid than corresponding H3-H4 heterotetramers. Can assemble into nucleosomes that contain both CENPA and histone H3.3; these nucleosomes interact with a single CENPC chain. Heterotrimer composed of HJURP, CENPA and histone H4, where HJURP interacts with the dimer formed by CENPA and histone H4 and prevents tetramerization of CENPA and H4. Component of the CENPA-NAC complex, at least composed of CENPA, CENPC, CENPH, CENPM, CENPN, CENPT and CENPU. Interacts (via CATD domain) with HJURP; the interaction is direct and is required for its localization to centromeres. Interacts with CENPC, CENPN and CENPT; interaction is direct. Part of a centromere complex consisting of CENPA, CENPT and CENPW. Identified in centromere complexes containing histones H2A, H2B and H4, and at least CENPA, CENPB, CENPC, CENPT, CENPN, HJURP, SUPT16H, SSRP1 and RSF1. Can self-associate. The CENPA-H4 heterotetramer can bind DNA by itself (in vitro). Interacts with CDK1, PPP1CA and RBBP7. Trimethylated by NTMT1 at the N-terminal glycine after cleavage of Met-1. Methylation is low before incorporation into nucleosomes and increases with cell cycle progression, with the highest levels in mitotic nucleosomes. In terms of processing, poly-ADP-ribosylated by PARP1.

The protein resides in the nucleus. It localises to the chromosome. It is found in the centromere. Its function is as follows. Histone H3-like nucleosomal protein that is specifically found in centromeric nucleosomes. Replaces conventional H3 in the nucleosome core of centromeric chromatin that serves as an assembly site for the inner kinetochore. The presence of CENPA subtly modifies the nucleosome structure and the way DNA is wrapped around the nucleosome and gives rise to protruding DNA ends that are less well-ordered and rigid compared to nucleosomes containing histone H3. May serve as an epigenetic mark that propagates centromere identity through replication and cell division. Required for recruitment and assembly of kinetochore proteins, and as a consequence required for progress through mitosis, chromosome segregation and cytokinesis. The chain is Histone H3-like centromeric protein A (CENPA) from Bos taurus (Bovine).